An 87-amino-acid polypeptide reads, in one-letter code: DNA-directed RNA polymerase subunit omega (87 aa).

The protein belongs to the RNA polymerase subunit omega family. As to quaternary structure, the RNAP catalytic core consists of 2 alpha, 1 beta, 1 beta' and 1 omega subunit. When a sigma factor is associated with the core the holoenzyme is formed, which can initiate transcription.

The enzyme catalyses RNA(n) + a ribonucleoside 5'-triphosphate = RNA(n+1) + diphosphate. In terms of biological role, promotes RNA polymerase assembly. Latches the N- and C-terminal regions of the beta' subunit thereby facilitating its interaction with the beta and alpha subunits. This is DNA-directed RNA polymerase subunit omega from Alcanivorax borkumensis (strain ATCC 700651 / DSM 11573 / NCIMB 13689 / SK2).